The chain runs to 443 residues: Xaa-Pro dipeptidase (443 aa).

Residues aspartate 244, aspartate 255, histidine 336, glutamate 381, and glutamate 420 each coordinate Mn(2+).

The protein belongs to the peptidase M24B family. Bacterial-type prolidase subfamily. Mn(2+) serves as cofactor.

The catalysed reaction is Xaa-L-Pro dipeptide + H2O = an L-alpha-amino acid + L-proline. In terms of biological role, splits dipeptides with a prolyl residue in the C-terminal position. This chain is Xaa-Pro dipeptidase, found in Stenotrophomonas maltophilia (strain K279a).